The following is a 248-amino-acid chain: Transcription factor bHLH35 (248 aa).

The span at 37–54 (SGSYDSSSPDGAASSPAS) shows a compositional bias: low complexity. The segment at 37–60 (SGSYDSSSPDGAASSPASKNIVSE) is disordered. Residues 51-100 (SPASKNIVSERNRRQKLNQRLFALRSVVPNITKMDKASIIKDAISYIEGL) enclose the bHLH domain.

In terms of assembly, homodimer. As to expression, expressed constitutively in roots, leaves, stems, and flowers.

The protein resides in the nucleus. In Arabidopsis thaliana (Mouse-ear cress), this protein is Transcription factor bHLH35 (BHLH35).